The chain runs to 337 residues: MAIETLYDSDADLTIIQGRKVAIIGYGSQGHAHAMNLRDSGVEVAIGLREGSKSREKAEEAGFKVLTNAEAAKWADVIMLLAPDTSQAAIFTEDIEPNLEDGNALFFGHGLNIHFGLIKPAENITIGMVAPKGPGHLVRRQFVDGKGVPCLIATEQDPKGEGRELTLSYAAAIGGARAGVIPTTFKDETETDLFGEQAVLCGGVEYLIMNGFEVLTEAGYEPEMAYFEVCHELKLIVDLIVEGGIKNMNYSCSDTAEFGGYLSGPRVIDASVKERMKDVLTDIQDGTFVKRLVANVEGGNKELEDLRAKVNSHPIEQTGSQLRDLMSWVKNPLDATA.

The 183-residue stretch at 1–183 (MAIETLYDSD…GGARAGVIPT (183 aa)) folds into the KARI N-terminal Rossmann domain. NADP(+)-binding positions include 26–29 (YGSQ), R49, S52, S54, and 84–87 (DTSQ). Residue H109 is part of the active site. G135 provides a ligand contact to NADP(+). In terms of domain architecture, KARI C-terminal knotted spans 184 to 329 (TFKDETETDL…SQLRDLMSWV (146 aa)). Residues D192, E196, E228, and E232 each contribute to the Mg(2+) site. Position 253 (S253) interacts with substrate.

The protein belongs to the ketol-acid reductoisomerase family. It depends on Mg(2+) as a cofactor.

It catalyses the reaction (2R)-2,3-dihydroxy-3-methylbutanoate + NADP(+) = (2S)-2-acetolactate + NADPH + H(+). The enzyme catalyses (2R,3R)-2,3-dihydroxy-3-methylpentanoate + NADP(+) = (S)-2-ethyl-2-hydroxy-3-oxobutanoate + NADPH + H(+). Its pathway is amino-acid biosynthesis; L-isoleucine biosynthesis; L-isoleucine from 2-oxobutanoate: step 2/4. The protein operates within amino-acid biosynthesis; L-valine biosynthesis; L-valine from pyruvate: step 2/4. Functionally, involved in the biosynthesis of branched-chain amino acids (BCAA). Catalyzes an alkyl-migration followed by a ketol-acid reduction of (S)-2-acetolactate (S2AL) to yield (R)-2,3-dihydroxy-isovalerate. In the isomerase reaction, S2AL is rearranged via a Mg-dependent methyl migration to produce 3-hydroxy-3-methyl-2-ketobutyrate (HMKB). In the reductase reaction, this 2-ketoacid undergoes a metal-dependent reduction by NADPH to yield (R)-2,3-dihydroxy-isovalerate. This is Ketol-acid reductoisomerase (NADP(+)) from Corynebacterium aurimucosum (strain ATCC 700975 / DSM 44827 / CIP 107346 / CN-1) (Corynebacterium nigricans).